A 291-amino-acid polypeptide reads, in one-letter code: 33 kDa chaperonin (291 aa).

Intrachain disulfides connect C237-C239 and C270-C273.

Belongs to the HSP33 family. Under oxidizing conditions two disulfide bonds are formed involving the reactive cysteines. Under reducing conditions zinc is bound to the reactive cysteines and the protein is inactive.

Its subcellular location is the cytoplasm. Functionally, redox regulated molecular chaperone. Protects both thermally unfolding and oxidatively damaged proteins from irreversible aggregation. Plays an important role in the bacterial defense system toward oxidative stress. The sequence is that of 33 kDa chaperonin from Bacillus cereus (strain B4264).